Reading from the N-terminus, the 92-residue chain is Small ribosomal subunit protein uS19 (92 aa).

Belongs to the universal ribosomal protein uS19 family.

Protein S19 forms a complex with S13 that binds strongly to the 16S ribosomal RNA. This is Small ribosomal subunit protein uS19 from Brucella anthropi (strain ATCC 49188 / DSM 6882 / CCUG 24695 / JCM 21032 / LMG 3331 / NBRC 15819 / NCTC 12168 / Alc 37) (Ochrobactrum anthropi).